Here is a 368-residue protein sequence, read N- to C-terminus: UDP-N-acetylglucosamine--N-acetylmuramyl-(pentapeptide) pyrophosphoryl-undecaprenol N-acetylglucosamine transferase (368 aa).

UDP-N-acetyl-alpha-D-glucosamine contacts are provided by residues 16–18, Asn-130, Arg-171, Ser-197, and Gln-296; that span reads TGG.

It belongs to the glycosyltransferase 28 family. MurG subfamily.

Its subcellular location is the cell inner membrane. The catalysed reaction is di-trans,octa-cis-undecaprenyl diphospho-N-acetyl-alpha-D-muramoyl-L-alanyl-D-glutamyl-meso-2,6-diaminopimeloyl-D-alanyl-D-alanine + UDP-N-acetyl-alpha-D-glucosamine = di-trans,octa-cis-undecaprenyl diphospho-[N-acetyl-alpha-D-glucosaminyl-(1-&gt;4)]-N-acetyl-alpha-D-muramoyl-L-alanyl-D-glutamyl-meso-2,6-diaminopimeloyl-D-alanyl-D-alanine + UDP + H(+). The protein operates within cell wall biogenesis; peptidoglycan biosynthesis. Cell wall formation. Catalyzes the transfer of a GlcNAc subunit on undecaprenyl-pyrophosphoryl-MurNAc-pentapeptide (lipid intermediate I) to form undecaprenyl-pyrophosphoryl-MurNAc-(pentapeptide)GlcNAc (lipid intermediate II). This chain is UDP-N-acetylglucosamine--N-acetylmuramyl-(pentapeptide) pyrophosphoryl-undecaprenol N-acetylglucosamine transferase, found in Acidiphilium cryptum (strain JF-5).